Consider the following 345-residue polypeptide: MKEFDLESYDYYLPKELIASYPVLPKEKAKLLVYERRSQKITHTTFEHVLDFFPKNALIVLNDTKVIKARLFGSKHAFLPSKTTEVFFHRFFKNNTALTQIKGKIKVGDKIFFDANYHAEVLELLHNGQRLIAFYDNKTPLNQENILKLLEQYGHMPLPPYIKRADESLDAHEYQSVFAKHMGAVAAPTASLHFSQNTLEKLLKDFKHAFLTLHVGAGTFLSVETKDIREHQIHTEVLRIPKKSQEILQKSQEILCVGTTALRSVEYFKRLENPNQEAFECDIFLHFANPILHVNYLLTNFHLPKSSLLMLVSTMIGLEKTKEIYKTAIEKKYRFYSYGDGMLIL.

It belongs to the QueA family. Monomer.

The protein localises to the cytoplasm. It catalyses the reaction 7-aminomethyl-7-carbaguanosine(34) in tRNA + S-adenosyl-L-methionine = epoxyqueuosine(34) in tRNA + adenine + L-methionine + 2 H(+). The protein operates within tRNA modification; tRNA-queuosine biosynthesis. Its function is as follows. Transfers and isomerizes the ribose moiety from AdoMet to the 7-aminomethyl group of 7-deazaguanine (preQ1-tRNA) to give epoxyqueuosine (oQ-tRNA). This Helicobacter pylori (strain ATCC 700392 / 26695) (Campylobacter pylori) protein is S-adenosylmethionine:tRNA ribosyltransferase-isomerase.